Consider the following 383-residue polypeptide: ATP phosphoribosyltransferase regulatory subunit (383 aa).

It belongs to the class-II aminoacyl-tRNA synthetase family. HisZ subfamily. As to quaternary structure, heteromultimer composed of HisG and HisZ subunits.

Its subcellular location is the cytoplasm. Its pathway is amino-acid biosynthesis; L-histidine biosynthesis; L-histidine from 5-phospho-alpha-D-ribose 1-diphosphate: step 1/9. Required for the first step of histidine biosynthesis. May allow the feedback regulation of ATP phosphoribosyltransferase activity by histidine. The polypeptide is ATP phosphoribosyltransferase regulatory subunit (Neisseria meningitidis serogroup C (strain 053442)).